Consider the following 1377-residue polypeptide: Temperature-sensitive hemagglutinin tsh autotransporter (1377 aa).

An N-terminal signal peptide occupies residues 1 to 52 (MNRIYSLRYSAVARGFIAVSEFARKCVHKSVRRLCFPVLLLIPVLFSAGSLA). The 250-residue stretch at 53 to 302 (GTVNNELGYQ…AVIPLDFIGQ (250 aa)) folds into the Peptidase S6 domain. Residues His-125, Asp-153, and Ser-259 each act as charge relay system in the active site. An Autotransporter domain is found at 1111 to 1377 (DINGEAGTWV…AINANIRYSF (267 aa)).

Post-translationally, the C-terminus is blocked. Cleaved to release the mature protein from the outer membrane.

The protein localises to the periplasm. Its subcellular location is the secreted. It localises to the cell surface. The protein resides in the cell outer membrane. Functionally, contributes to the development of lesions and deposition of fibrin in the avian air sacs. It can act both as an adhesin and as a serine protease. Agglutinates erythrocytes while in contact with the extracellular surface of the bacterial cells. Can adhere to purified hemoglobin and bind with great efficiency to extracellular matrix proteins. Cleaves casein and exhibits mucinolytic activity. This Escherichia coli protein is Temperature-sensitive hemagglutinin tsh autotransporter (tsh).